Consider the following 283-residue polypeptide: Urease accessory protein UreD 2 (283 aa).

Over residues 1 to 11 (MGRRAPDRLDR) the composition is skewed to basic and acidic residues. Residues 1 to 30 (MGRRAPDRLDRGVTTTSPRTQAPPQAGRGV) are disordered. Over residues 13 to 23 (VTTTSPRTQAP) the composition is skewed to polar residues.

The protein belongs to the UreD family. In terms of assembly, ureD, UreF and UreG form a complex that acts as a GTP-hydrolysis-dependent molecular chaperone, activating the urease apoprotein by helping to assemble the nickel containing metallocenter of UreC. The UreE protein probably delivers the nickel.

The protein resides in the cytoplasm. Required for maturation of urease via the functional incorporation of the urease nickel metallocenter. In Saccharopolyspora erythraea (strain ATCC 11635 / DSM 40517 / JCM 4748 / NBRC 13426 / NCIMB 8594 / NRRL 2338), this protein is Urease accessory protein UreD 2.